The sequence spans 362 residues: Ribosome-binding ATPase YchF (362 aa).

One can recognise an OBG-type G domain in the interval 3-255 (FKCGIIGLPN…MSDEEKKSFM (253 aa)). 12 to 17 (NVGKST) lines the ATP pocket. Mg(2+)-binding residues include serine 16 and threonine 36. One can recognise a TGS domain in the interval 277-360 (NLITFFTVGD…QDGDIIHFLF (84 aa)).

It belongs to the TRAFAC class OBG-HflX-like GTPase superfamily. OBG GTPase family. YchF/OLA1 subfamily. It depends on Mg(2+) as a cofactor.

Its function is as follows. ATPase that binds to both the 70S ribosome and the 50S ribosomal subunit in a nucleotide-independent manner. This is Ribosome-binding ATPase YchF from Buchnera aphidicola subsp. Acyrthosiphon pisum (strain APS) (Acyrthosiphon pisum symbiotic bacterium).